The sequence spans 142 residues: Rhinocerosin (142 aa).

The N-terminal stretch at 1–16 (MMKLYIVFGFIAFSAA) is a signal peptide. Residues 17 to 70 (YVVPEGYYEPEYYPADGYESERVARASPAELIFDEDLADEPEVEEPQYYIRTRR) constitute a propeptide that is removed on maturation. Residues 72–96 (LQPGAPNFPMPGSQLPTSITSNIEK) are disordered. Positions 85-96 (QLPTSITSNIEK) are enriched in polar residues.

Belongs to the coleoptericin family. Strongly expressed in the fat body and the Malpighian tubules, and weakly expressed in hemocytes and midgut.

It is found in the secreted. Functionally, has strong antibacterial activity against E.coli, Streptococcus pyogenes, Staphylococcus aureus but not against Pseudomonas aeruginosa. The polypeptide is Rhinocerosin (Oryctes rhinoceros (Coconut rhinoceros beetle)).